The chain runs to 557 residues: Glutathione hydrolase proenzyme (557 aa).

The signal sequence occupies residues 1–24 (MQPVLFRTLSLGVAIAAASSSAFA). Arg-94 contributes to the L-glutamate binding site. Catalysis depends on Thr-364, which acts as the Nucleophile. Residues Thr-382, Asn-384, Glu-403, Asp-406, 435–436 (SS), and 456–457 (GG) contribute to the L-glutamate site.

Belongs to the gamma-glutamyltransferase family. As to quaternary structure, this enzyme consists of two polypeptide chains, which are synthesized in precursor form from a single polypeptide. Post-translationally, cleaved by autocatalysis into a large and a small subunit.

The protein localises to the periplasm. The enzyme catalyses an N-terminal (5-L-glutamyl)-[peptide] + an alpha-amino acid = 5-L-glutamyl amino acid + an N-terminal L-alpha-aminoacyl-[peptide]. It catalyses the reaction glutathione + H2O = L-cysteinylglycine + L-glutamate. The catalysed reaction is an S-substituted glutathione + H2O = an S-substituted L-cysteinylglycine + L-glutamate. Its pathway is sulfur metabolism; glutathione metabolism. The sequence is that of Glutathione hydrolase proenzyme (ggt) from Pseudomonas aeruginosa (strain ATCC 15692 / DSM 22644 / CIP 104116 / JCM 14847 / LMG 12228 / 1C / PRS 101 / PAO1).